A 485-amino-acid polypeptide reads, in one-letter code: Pre-glycoprotein polyprotein GP complex (485 aa).

A lipid anchor (N-myristoyl glycine; by host) is attached at Gly-2. The Extracellular portion of the chain corresponds to 2–17; it reads GQFISFMQEIPTFLQE. A helical transmembrane segment spans residues 18–33; the sequence is ALNIALVAVSLIAIIK. Over 34–58 the chain is Cytoplasmic; it reads GVVNLYKSGLFQFFVFLALAGRSCT. Cys-57 lines the Zn(2+) pocket. At 59–424 the chain is on the extracellular side; that stretch reads EEAFKIGLHT…QGKTPLTLVD (366 aa). Intrachain disulfides connect Cys-92–Cys-226, Cys-135–Cys-164, Cys-207–Cys-213, Cys-271–Cys-284, Cys-293–Cys-302, and Cys-356–Cys-377. N-linked (GlcNAc...) asparagine; by host glycosylation is found at Asn-95 and Asn-105. 2 N-linked (GlcNAc...) asparagine; by host glycosylation sites follow: Asn-166 and Asn-178. The segment at 250–286 is fusion; sequence LKAFFSWSLTDSSGKDTPGGYCLEEWMLVAAKMKCFG. The HR1 stretch occupies residues 287–355; it reads NTAVAKCNLN…KIRELMSVPY (69 aa). 4 N-linked (GlcNAc...) asparagine; by host glycosylation sites follow: Asn-357, Asn-365, Asn-382, and Asn-387. Positions 360–423 are HR2; that stretch reads KFWYVNHTLS…RQGKTPLTLV (64 aa). The helical transmembrane segment at 425 to 445 threads the bilayer; that stretch reads ICFWSTVFFTASLFLHLVGIP. Residues 446–485 are Cytoplasmic-facing; the sequence is THRHIRGEACPLPHRLNSLGGCRCGKYPNLKKPTVWRRGH. Residues His-447, His-449, Cys-455, His-459, Cys-467, Cys-469, and His-485 each coordinate Zn(2+).

This sequence belongs to the arenaviridae GPC protein family. In terms of assembly, interacts with glycoprotein G2. Part of the GP complex (GP-C) together with glycoprotein G1 and glycoprotein G2. The GP-complex interacts with protein Z, which interacts with ribonucleocapsid; these interactions may induce virion budding. Homotrimer; disulfide-linked. In pre-fusion state, G1 homotrimers bind G2 homotrimers via ionic interactions. Part of the GP complex (GP-C) together with glycoprotein G2 and the stable signal peptide. Interacts with host TFRC. The GP-complex interacts with protein Z, which interacts with ribonucleocapsid; these interactions may induce virion budding. As to quaternary structure, homotrimer. Interacts with the stable signal peptide. In pre-fusion state, G2 homotrimers bind G1 homotrimers via ionic interactions. Part of the GP complex (GP-C) together with glycoprotein G1 and the stable signal peptide. Acidification in the endosome triggers rearrangements, which ultimately leads to a 6 helix bundle formed by the two heptad repeat domains (HR1 and HR2) in post-fusion state. The GP-complex interacts with protein Z, which interacts with ribonucleocapsid; these interactions may induce virion budding. Specific enzymatic cleavages in vivo yield mature proteins. GP-C polyprotein is cleaved in the endoplasmic reticulum by the host protease MBTPS1. Only cleaved glycoprotein is incorporated into virions. Post-translationally, the SSP remains stably associated with the GP complex following cleavage by signal peptidase and plays crucial roles in the trafficking of GP through the secretory pathway. In terms of processing, myristoylation is necessary for GP2-mediated fusion activity.

The protein localises to the virion membrane. It is found in the host endoplasmic reticulum membrane. The protein resides in the host Golgi apparatus membrane. It localises to the host cell membrane. In terms of biological role, functions as a cleaved signal peptide that is retained as the third component of the GP complex (GP-C). Helps to stabilize the spike complex in its native conformation. The SSP is required for efficient glycoprotein expression, post-translational maturation cleavage of G1 and G2, glycoprotein transport to the cell surface plasma membrane, formation of infectious virus particles, and acid pH-dependent glycoprotein-mediated cell fusion. Functionally, forms the virion spikes together with glycoprotein G2. The glycoprotein spike trimers are connected to the underlying matrix. Mediates virus attachment to host TFRC. This attachment induces virion internalization predominantly through clathrin-mediated endocytosis. Forms the virion spikes together with glycoprotein G1. The glycoprotein spike trimers are connected to the underlying matrix. Class I viral fusion protein that directs fusion of viral and host endosomal membranes, leading to delivery of the nucleocapsid into the cytoplasm. Membrane fusion is mediated by irreversible conformational changes induced by acidification. In Junin mammarenavirus (JUNV), this protein is Pre-glycoprotein polyprotein GP complex.